Consider the following 385-residue polypeptide: Cell wall mannoprotein PIR1 (385 aa).

A signal peptide spans 1-18 (MKYSTLVSIAAFISTSLA). PIR1/2/3 repeat units lie at residues 78-96 (ATPV…TTGG), 97-115 (VSAI…TNAA), 116-133 (QPIA…TTAK), 136-153 (ATPV…QTTV), 154-171 (QPVA…TAKA), 173-190 (ATPV…QTTV), 191-208 (QPVA…TVKA), 210-228 (ATPV…TTAA), and 233-251 (ASAV…TTTA). Positions 257 to 282 (AQSDGQAIATGSPSSNSTLSDDDDLS) are disordered. N-linked (GlcNAc...) asparagine glycosylation is present at Asn-272.

The protein belongs to the PIR protein family. Post-translationally, covalently linked to beta-1,3-glucan of the inner cell wall layer via an alkali-sensitive ester linkage between the gamma-carboxyl group of glutamic acids, arising from specific glutamines within the PIR1/2/3 repeats, and hydroxyl groups of glucoses of beta-1,3-glucan chains. In terms of processing, highly O-glycosylated by PMT1 and contains one N-mannosylated chain.

Its subcellular location is the secreted. The protein resides in the cell wall. Component of the outer cell wall layer required for stability of the cell wall and specifically for cell wall rigidity. This is Cell wall mannoprotein PIR1 (PIR1) from Candida albicans (strain SC5314 / ATCC MYA-2876) (Yeast).